We begin with the raw amino-acid sequence, 128 residues long: ATP synthase epsilon chain (128 aa).

Belongs to the ATPase epsilon chain family. In terms of assembly, F-type ATPases have 2 components, CF(1) - the catalytic core - and CF(0) - the membrane proton channel. CF(1) has five subunits: alpha(3), beta(3), gamma(1), delta(1), epsilon(1). CF(0) has three main subunits: a, b and c.

Its subcellular location is the cell inner membrane. In terms of biological role, produces ATP from ADP in the presence of a proton gradient across the membrane. This is ATP synthase epsilon chain from Sulfurovum sp. (strain NBC37-1).